Reading from the N-terminus, the 264-residue chain is Thymidylate synthase (264 aa).

R21 provides a ligand contact to dUMP. H51 lines the (6R)-5,10-methylene-5,6,7,8-tetrahydrofolate pocket. 126-127 serves as a coordination point for dUMP; the sequence is RR. C146 functions as the Nucleophile in the catalytic mechanism. Residues 166 to 169, N177, and 207 to 209 each bind dUMP; these read RSAD and HLY. D169 lines the (6R)-5,10-methylene-5,6,7,8-tetrahydrofolate pocket. A263 provides a ligand contact to (6R)-5,10-methylene-5,6,7,8-tetrahydrofolate.

Belongs to the thymidylate synthase family. Bacterial-type ThyA subfamily. As to quaternary structure, homodimer.

The protein resides in the cytoplasm. It catalyses the reaction dUMP + (6R)-5,10-methylene-5,6,7,8-tetrahydrofolate = 7,8-dihydrofolate + dTMP. The protein operates within pyrimidine metabolism; dTTP biosynthesis. Its function is as follows. Catalyzes the reductive methylation of 2'-deoxyuridine-5'-monophosphate (dUMP) to 2'-deoxythymidine-5'-monophosphate (dTMP) while utilizing 5,10-methylenetetrahydrofolate (mTHF) as the methyl donor and reductant in the reaction, yielding dihydrofolate (DHF) as a by-product. This enzymatic reaction provides an intracellular de novo source of dTMP, an essential precursor for DNA biosynthesis. The chain is Thymidylate synthase from Rhizobium johnstonii (strain DSM 114642 / LMG 32736 / 3841) (Rhizobium leguminosarum bv. viciae).